We begin with the raw amino-acid sequence, 1140 residues long: GPI inositol-deacylase (1140 aa).

The segment at 1-84 (MHRRSSGSSP…TTWASHDPPR (84 aa)) is disordered. Positions 55 to 78 (GKSTPRSRNSSTWRTLSSATTTWA) are enriched in polar residues. Residue Asn-63 is glycosylated (N-linked (GlcNAc...) asparagine). The chain crosses the membrane as a helical span at residues 117 to 137 (SCSILTALTTILACVFLFSIV). The active site involves Ser-304. The helical transmembrane segment at 782-802 (LVMRYRTVFAAFPLLVVSLTL) threads the bilayer. N-linked (GlcNAc...) asparagine glycosylation is present at Asn-862. 7 helical membrane passes run 882–902 (AFFWFLVPLFGLICVGVCVLL), 905–925 (VALIVLQILSVVYGLWNSKSG), 952–972 (VLLVLVSTAIPYQFAYLVACI), 1002–1022 (SVFILMLWVLPINILVLLVWA), 1039–1059 (VLSIMPFIILVETMTTGSMIP), 1070–1090 (SVLLFCIAVYSAVYGVSYAYI), and 1094–1114 (LVNILAGWLVSIYFFRSGFSL).

This sequence belongs to the GPI inositol-deacylase family.

The protein localises to the endoplasmic reticulum membrane. Functionally, involved in inositol deacylation of GPI-anchored proteins which plays important roles in the quality control and ER-associated degradation of GPI-anchored proteins. This is GPI inositol-deacylase (bst1) from Emericella nidulans (strain FGSC A4 / ATCC 38163 / CBS 112.46 / NRRL 194 / M139) (Aspergillus nidulans).